Consider the following 459-residue polypeptide: Serine/threonine-protein kinase 12 (459 aa).

A disordered region spans residues 1 to 30 (MEEDYQQPRFTIGRQSSMAPEKIPEPSVHS). ANK repeat units lie at residues 42 to 71 (DGGV…DANY), 75 to 104 (DDRT…EVDP), and 108 to 137 (WGST…KHPM). One can recognise a Protein kinase domain in the interval 102 to 417 (VDPKDRWGST…EIIKRLESIL (316 aa)). Residues 108-116 (WGSTPFADA) and lysine 184 each bind ATP. The Proton acceptor role is filled by aspartate 281.

It belongs to the protein kinase superfamily. Ser/Thr protein kinase family. Interacts with BLUS1, PHOT1 and PHOT2. As to expression, accumulates in leaves, stems, petioles and roots, especially in guard cells.

The protein localises to the cytoplasm. It is found in the cytosol. The enzyme catalyses L-seryl-[protein] + ATP = O-phospho-L-seryl-[protein] + ADP + H(+). It catalyses the reaction L-threonyl-[protein] + ATP = O-phospho-L-threonyl-[protein] + ADP + H(+). Its function is as follows. Serine/threonine protein kinase that phosphorylates proteins on serine and threonine residues. Mediates blue light-dependent stomatal opening in guard cells by promoting plasma membrane-type ATPases (AHA1 and AHA2) phosphorylation. In Arabidopsis thaliana (Mouse-ear cress), this protein is Serine/threonine-protein kinase 12.